The sequence spans 953 residues: MDYKKSLNLPDTPFPMRGDLAKREPGWVAEWEETQVYQAIRAASRGRPRFVLHDGPPYANGDIHIGHAVNKILKDIIVKSRNMAGYDAHYVPGWDCHGMPIEIQIEKKYGKHLPVTEVQSKARAYALEQIDRQRKDFKRLGVLGDWHNPYLTMNFSNEADEIRVLGRILEKGYVFRGLKPVNWCFDCGSALAEAEVEYADRVDPAIDVAFPFTDRGALARAFGLDEVDAGAIVIWTTTPWTIPSNQALNVHPEIDYALVRVTPTPVHGPLLLLAQERVEPSLKAWGLEGEIIATAKGEALEGLRFRHPLAAAAQGYDRTSPIYLGDYVTLDTGTGVVHSAPAYGIEDFVSCKAHGLADSDILGPVMGDGKFVDSLPLFGGLSIWDANPRIVEALKLAGSLMLVQKLSHSYMHCWRHKTPVIYRATSQWFAGMDVKPRDGGPSLRESALAGIDATAFYPAWGRARLHAMIANRPDWTLSRQRQWGVPMAFFVHKETGELHPRTVELLEQVAQRVEKGGIEAWQSLDPRELLGDEAELYEKNRDTLDVWFDSGSTHATVLGGKDGVLGSSHGAELAWPADLYLEGSDQHRGWFHSSLLTGCMLYGHPPYKGLLTHGFVVDGQGRKMSKSVGNVIAPQKVSDSLGAEILRLWVASTDYSGELSISDEILKRVVESYRRIRNTLRFLLANVADFDAVGQAVPYGELFEIDRYALAMTAQMQAEVQGHYERYDFHPAVSRLQTFCSEDLGAFYLDILKDRLYTTAAGSAARRSAQTALLDITQTLLKLMAPILSFTAEEAWKVLAGSALAKQADAPRVTIFTEVYHALPPFADGEALTAKWTRLRAIRAEVQRKLEEVRSAGAIGSSLQAEVDLYANAADHDILASLGDDLRFVLIVSRATVHADADDLRIEIAASGHKKCERCWHWRPDVGQDADHPEICGRCVSNLFGAGEPRTRA.

The 'HIGH' region motif lies at 57–67 (PYANGDIHIGH). Glu-582 is an L-isoleucyl-5'-AMP binding site. The 'KMSKS' region signature appears at 623-627 (KMSKS). Lys-626 contributes to the ATP binding site. Residues Cys-916, Cys-919, Cys-936, and Cys-939 each contribute to the Zn(2+) site.

Belongs to the class-I aminoacyl-tRNA synthetase family. IleS type 1 subfamily. As to quaternary structure, monomer. Requires Zn(2+) as cofactor.

It is found in the cytoplasm. The catalysed reaction is tRNA(Ile) + L-isoleucine + ATP = L-isoleucyl-tRNA(Ile) + AMP + diphosphate. Its function is as follows. Catalyzes the attachment of isoleucine to tRNA(Ile). As IleRS can inadvertently accommodate and process structurally similar amino acids such as valine, to avoid such errors it has two additional distinct tRNA(Ile)-dependent editing activities. One activity is designated as 'pretransfer' editing and involves the hydrolysis of activated Val-AMP. The other activity is designated 'posttransfer' editing and involves deacylation of mischarged Val-tRNA(Ile). This is Isoleucine--tRNA ligase from Bordetella parapertussis (strain 12822 / ATCC BAA-587 / NCTC 13253).